Reading from the N-terminus, the 142-residue chain is Galectin-10 (142 aa).

An N-acetylserine modification is found at Ser2. One can recognise a Galectin domain in the interval 6–138 (VPYTEAASLS…DISLTKFNVS (133 aa)).

Interacts with CEL. As to expression, expressed abundantly in the bone marrow. Expressed exclusively by eosinophils and basophils. Not detected in monocytes and neutrophils. Expressed in CD25-positive regulatory T-cells (Treg) (at protein level). Found in intestinal tissue from patients with Celiac disease, expression is directly related to the histological grade of mucosal damage and to the number of eosinophils found in the duodenal lesion (at protein level). Found in sputum of patients with eosinophilic inflammatory diseases such as asthma (at protein level).

It is found in the cytoplasm. Its subcellular location is the cytosol. The protein resides in the cytoplasmic granule. Functionally, regulates immune responses through the recognition of cell-surface glycans. Essential for the anergy and suppressive function of CD25-positive regulatory T-cells (Treg). The chain is Galectin-10 (CLC) from Homo sapiens (Human).